We begin with the raw amino-acid sequence, 326 residues long: Ketol-acid reductoisomerase (NADP(+)) (326 aa).

The 180-residue stretch at 1–180 folds into the KARI N-terminal Rossmann domain; the sequence is MDIIHDNAAD…GLTRGGVLEC (180 aa). Residues 24–27, arginine 47, and serine 51 contribute to the NADP(+) site; that span reads YGAQ. The active site involves histidine 106. Glycine 132 contributes to the NADP(+) binding site. One can recognise a KARI C-terminal knotted domain in the interval 181-326; the sequence is TMAQETYEDL…AKIRSLFERN (146 aa). Residues aspartate 189, glutamate 193, glutamate 225, and glutamate 229 each coordinate Mg(2+). Serine 250 contributes to the substrate binding site.

This sequence belongs to the ketol-acid reductoisomerase family. The cofactor is Mg(2+).

The enzyme catalyses (2R)-2,3-dihydroxy-3-methylbutanoate + NADP(+) = (2S)-2-acetolactate + NADPH + H(+). It catalyses the reaction (2R,3R)-2,3-dihydroxy-3-methylpentanoate + NADP(+) = (S)-2-ethyl-2-hydroxy-3-oxobutanoate + NADPH + H(+). It functions in the pathway amino-acid biosynthesis; L-isoleucine biosynthesis; L-isoleucine from 2-oxobutanoate: step 2/4. It participates in amino-acid biosynthesis; L-valine biosynthesis; L-valine from pyruvate: step 2/4. Involved in the biosynthesis of branched-chain amino acids (BCAA). Catalyzes an alkyl-migration followed by a ketol-acid reduction of (S)-2-acetolactate (S2AL) to yield (R)-2,3-dihydroxy-isovalerate. In the isomerase reaction, S2AL is rearranged via a Mg-dependent methyl migration to produce 3-hydroxy-3-methyl-2-ketobutyrate (HMKB). In the reductase reaction, this 2-ketoacid undergoes a metal-dependent reduction by NADPH to yield (R)-2,3-dihydroxy-isovalerate. The polypeptide is Ketol-acid reductoisomerase (NADP(+)) (Akkermansia muciniphila (strain ATCC BAA-835 / DSM 22959 / JCM 33894 / BCRC 81048 / CCUG 64013 / CIP 107961 / Muc)).